A 129-amino-acid chain; its full sequence is Small ribosomal subunit protein uS11 (129 aa).

Belongs to the universal ribosomal protein uS11 family. As to quaternary structure, part of the 30S ribosomal subunit. Interacts with proteins S7 and S18. Binds to IF-3.

Located on the platform of the 30S subunit, it bridges several disparate RNA helices of the 16S rRNA. Forms part of the Shine-Dalgarno cleft in the 70S ribosome. This chain is Small ribosomal subunit protein uS11, found in Zymomonas mobilis subsp. mobilis (strain ATCC 31821 / ZM4 / CP4).